A 656-amino-acid chain; its full sequence is Methionine--tRNA ligase (656 aa).

Positions 11–21 match the 'HIGH' region motif; that stretch reads YYVNDIPHIGH. Positions 126, 129, 147, and 150 each coordinate Zn(2+). A 'KMSKS' region motif is present at residues 301-305; the sequence is KMSKS. Lys-304 contributes to the ATP binding site. The tRNA-binding domain maps to 555 to 656; sequence DFKKVEIKVG…REKIAGSLIS (102 aa).

Belongs to the class-I aminoacyl-tRNA synthetase family. MetG type 2A subfamily. As to quaternary structure, homodimer. It depends on Zn(2+) as a cofactor.

The protein resides in the cytoplasm. The enzyme catalyses tRNA(Met) + L-methionine + ATP = L-methionyl-tRNA(Met) + AMP + diphosphate. In terms of biological role, is required not only for elongation of protein synthesis but also for the initiation of all mRNA translation through initiator tRNA(fMet) aminoacylation. The protein is Methionine--tRNA ligase (metG) of Helicobacter pylori (strain J99 / ATCC 700824) (Campylobacter pylori J99).